An 863-amino-acid chain; its full sequence is Chloride channel protein A (863 aa).

Residues 1–124 (MFRNNNNDNN…TSKLNHMLKT (124 aa)) lie on the Cytoplasmic side of the membrane. The tract at residues 48–78 (ENGLINNNNNSHNNNNGGNNNNHGPSKVTHR) is disordered. A compositionally biased stretch (low complexity) spans 49 to 71 (NGLINNNNNSHNNNNGGNNNNHG). Helical transmembrane passes span 125-145 (FGKW…AYLV), 171-191 (IAFL…SLVI), 228-248 (LVSL…GPMI), 289-309 (GAAA…LFGF), 324-344 (TFFA…GFDM), 367-387 (LIPF…FVNL), and 408-428 (VLEV…CAAF). The segment at 434-460 (KTQANGSQTNSLDTSSSSILSSSGDNS) is disordered. The span at 439–460 (GSQTNSLDTSSSSILSSSGDNS) shows a compositional bias: low complexity. 3 consecutive transmembrane segments (helical) span residues 518–538 (IFTI…TTIT), 539–559 (SGLM…ATFG), and 561–581 (LVGQ…ALVG). CBS domains lie at 661–742 (MKTE…CHEQ) and 816–863 (MNLS…KDLL).

The protein belongs to the chloride channel (TC 2.A.49) family.

Its subcellular location is the membrane. In terms of biological role, voltage-gated chloride channel. Chloride channels may have several functions including the regulation of cell volume, membrane potential stabilization and signal transduction. In Dictyostelium discoideum (Social amoeba), this protein is Chloride channel protein A (clcA).